We begin with the raw amino-acid sequence, 374 residues long: WW domain-binding protein 4 (374 aa).

Residues 11–42 (KFCDYCKCWIADNRPSVEFHERGKNHKENVAR) form a Matrin-type zinc finger. The segment covering 91–109 (EPTISPVTNTVQPTPTANQ) has biased composition (polar residues). Disordered stretches follow at residues 91–126 (EPTI…SKGR) and 188–328 (SKWE…EAGA). The segment covering 112-121 (EKKKKKKKKE) has biased composition (basic residues). WW domains are found at residues 121-154 (EASK…KPEG) and 162-195 (TAAK…KPDD). 2 stretches are compositionally biased toward basic and acidic residues: residues 188–197 (SKWEKPDDFI) and 205–270 (SSKD…EKTT). 3 positions are modified to phosphoserine: Ser-219, Ser-226, and Ser-228. Polar residues predominate over residues 315 to 325 (STENECLSSSE). Residues 355-373 (KKRRIENGKSRNLRQRGED) form an interaction with SNRNP200 region.

In terms of assembly, component of the spliceosome B complex. Associated with U2 snRNPs. Binds splicing factors SNRPB, SNRPC and SF1. Interacts via the WW domains with the Pro-rich domains of KHDRBS1/SAM68. Interacts via the WW domains with the Pro-rich domains of WBP11. Interacts with SNRNP200.

It localises to the nucleus. Its subcellular location is the nucleus speckle. Functionally, involved in pre-mRNA splicing as a component of the spliceosome. May play a role in cross-intron bridging of U1 and U2 snRNPs in the mammalian A complex. The sequence is that of WW domain-binding protein 4 (Wbp4) from Rattus norvegicus (Rat).